A 104-amino-acid polypeptide reads, in one-letter code: L-rhamnose mutarotase (104 aa).

Tyr-18 is a substrate binding site. His-22 functions as the Proton donor in the catalytic mechanism. Substrate-binding positions include Tyr-41 and 76 to 77 (WW).

This sequence belongs to the rhamnose mutarotase family. In terms of assembly, homodimer.

Its subcellular location is the cytoplasm. It catalyses the reaction alpha-L-rhamnose = beta-L-rhamnose. Its pathway is carbohydrate metabolism; L-rhamnose metabolism. Its function is as follows. Involved in the anomeric conversion of L-rhamnose. The polypeptide is L-rhamnose mutarotase (Escherichia coli O8 (strain IAI1)).